A 195-amino-acid polypeptide reads, in one-letter code: dTTP/UTP pyrophosphatase (195 aa).

Asp-77 (proton acceptor) is an active-site residue.

It belongs to the Maf family. YhdE subfamily. It depends on a divalent metal cation as a cofactor.

It localises to the cytoplasm. It carries out the reaction dTTP + H2O = dTMP + diphosphate + H(+). The catalysed reaction is UTP + H2O = UMP + diphosphate + H(+). In terms of biological role, nucleoside triphosphate pyrophosphatase that hydrolyzes dTTP and UTP. May have a dual role in cell division arrest and in preventing the incorporation of modified nucleotides into cellular nucleic acids. In Flavobacterium psychrophilum (strain ATCC 49511 / DSM 21280 / CIP 103535 / JIP02/86), this protein is dTTP/UTP pyrophosphatase.